The following is an 88-amino-acid chain: Small ribosomal subunit protein bS20 (88 aa).

Residues 1–23 (MPNTKSAEKALRVADANRQENRR) show a composition bias toward basic and acidic residues. The interval 1–29 (MPNTKSAEKALRVADANRQENRRAKSQVK) is disordered.

Belongs to the bacterial ribosomal protein bS20 family.

Functionally, binds directly to 16S ribosomal RNA. The chain is Small ribosomal subunit protein bS20 from Dehalococcoides mccartyi (strain ATCC BAA-2100 / JCM 16839 / KCTC 5957 / BAV1).